Consider the following 107-residue polypeptide: ATPase inhibitor, mitochondrial (107 aa).

Residues 1-25 constitute a mitochondrion transit peptide; the sequence is MAGSALAVRARLGVWGMRVLQTRGF. Residues 25-58 form a disordered region; that stretch reads FGSDSSESMDSGAGSIREAGGAFGKREKAEEDRY. Positions 26-52 are N-terminal inhibitory region; the sequence is GSDSSESMDSGAGSIREAGGAFGKREK. Position 39 is a phosphoserine (Ser39). Positions 48–58 are enriched in basic and acidic residues; sequence GKREKAEEDRY. Residues 60–107 adopt a coiled-coil conformation; the sequence is REKTREQLAALKKHHEDEIDHHSKEIERLQKQIERHKKKIKYLKNSEH. The tract at residues 74 to 106 is antiparallel alpha-helical coiled coil region; the sequence is HEDEIDHHSKEIERLQKQIERHKKKIKYLKNSE. Position 103 is an N6-succinyllysine (Lys103).

The protein belongs to the ATPase inhibitor family. Homodimer; represents the active form and is present at a pH value below 6.5. Homotetramer; represents the inactive form and is present at a pH value above 7.0.

It is found in the mitochondrion. Functionally, endogenous F(1)F(o)-ATPase inhibitor limiting ATP depletion when the mitochondrial membrane potential falls below a threshold and the F(1)F(o)-ATP synthase starts hydrolyzing ATP to pump protons out of the mitochondrial matrix. Required to avoid the consumption of cellular ATP when the F(1)F(o)-ATP synthase enzyme acts as an ATP hydrolase. Indirectly acts as a regulator of heme synthesis in erythroid tissues: regulates heme synthesis by modulating the mitochondrial pH and redox potential, allowing FECH to efficiently catalyze the incorporation of iron into protoporphyrin IX to produce heme. The protein is ATPase inhibitor, mitochondrial of Rattus norvegicus (Rat).